A 756-amino-acid chain; its full sequence is uncharacterized protein (756 aa).

This is an uncharacterized protein from Mycoplasma genitalium (strain ATCC 33530 / DSM 19775 / NCTC 10195 / G37) (Mycoplasmoides genitalium).